The chain runs to 605 residues: MSNPVEQQVVCNRFRSHSCGLLNATFEQQHVRLAGWVHRKRDHGGLIFIDLRDHTGICQLVIQPEQQALFAEAEHLHNESVISVEGTVILRAENAINPRLSSGEIEVVISCMSIESNAHPLPFSVADELPTSEELRLKYRFLDLRREKLHENIIFRSRLTAAVRRYLEEKNFTEIQTPILTSSSPEGARDFLVPSRLHPGKFYALPQAPQQFKQLLMVAGFPRYFQIAPCFRDEDARADRSPGEFYQLDMEMAFIEQENLFEILEGMLEHITSTMSKKRITQVPFPRISYRDVMNRFGTDKPDLRIPLEIQDVTSLFVDSGFKVFAKNTVPGCCVKALVVKGRGNESRLFYDKAEKRAKELGSAGLAYIQFKDEGAKGPLVKFLSEDDMNALKQHLNLEQGDVVFFGAGKWEVTCKIMGGMRNYFADLFTLDKDELSFCWIVDFPMYEYNEEAKKIDFSHNPFSMPQGEMEALETKDALDILAYQYDIVCNGIELSSGAIRNHKPEIMYKAFAIAGYSREEVDQRFGHMIEAFKLGAPPHGGIAPGLDRLVMILCDEQNIREVIAFPMNQQAQDLMMSAPSEVTLAQLRELHLKVELPKKEEKKG.

Glutamate 186 lines the L-aspartate pocket. The tract at residues 210 to 213 (QQFK) is aspartate. Positions 232 and 460 each coordinate L-aspartate. Residue 232–234 (RDE) coordinates ATP. Glutamate 494 contributes to the ATP binding site. L-aspartate is bound at residue arginine 501. 546–549 (GLDR) lines the ATP pocket.

This sequence belongs to the class-II aminoacyl-tRNA synthetase family. Type 1 subfamily. Homodimer.

Its subcellular location is the cytoplasm. The catalysed reaction is tRNA(Asx) + L-aspartate + ATP = L-aspartyl-tRNA(Asx) + AMP + diphosphate. In terms of biological role, aspartyl-tRNA synthetase with relaxed tRNA specificity since it is able to aspartylate not only its cognate tRNA(Asp) but also tRNA(Asn). Reaction proceeds in two steps: L-aspartate is first activated by ATP to form Asp-AMP and then transferred to the acceptor end of tRNA(Asp/Asn). In Chlorobium chlorochromatii (strain CaD3), this protein is Aspartate--tRNA(Asp/Asn) ligase.